Consider the following 354-residue polypeptide: Inactive ADP-ribosyltransferase ARH2 (354 aa).

Serine 27 bears the Phosphoserine mark.

It belongs to the ADP-ribosylglycohydrolase family.

Its subcellular location is the cytoplasm. The protein localises to the myofibril. It localises to the sarcomere. Functionally, required for myofibril assembly and outgrowth of the cardiac chambers in the developing heart. Appears to be catalytically inactive, showing no activity against O-acetyl-ADP-ribose. This Pongo abelii (Sumatran orangutan) protein is Inactive ADP-ribosyltransferase ARH2 (ADPRHL1).